A 155-amino-acid chain; its full sequence is Putative pre-16S rRNA nuclease (155 aa).

This sequence belongs to the YqgF nuclease family.

Its subcellular location is the cytoplasm. Functionally, could be a nuclease involved in processing of the 5'-end of pre-16S rRNA. The sequence is that of Putative pre-16S rRNA nuclease from Xanthomonas campestris pv. campestris (strain 8004).